Reading from the N-terminus, the 93-residue chain is M-zodatoxin-Lt5a (93 aa).

The signal sequence occupies residues 1-22 (MKYCVVILALLVALVCITESRS). A propeptide spanning residues 23 to 64 (TETGYAVAETLEDNDLDELQAYLEEIAEASEMEDFSNIEEAR) is cleaved from the precursor. The Processing quadruplet motif motif lies at 61-64 (EEAR). At leucine 92 the chain carries Leucine amide.

Post-translationally, cleavage of the propeptide depends on the processing quadruplet motif (XXXR, with at least one of X being E). Expressed by the venom gland.

It localises to the secreted. In terms of biological role, has antimicrobial activity against. Gram-positive bacteria (A.globiformis VKM Ac-1112 (MIC=1.1 uM), and B.subtilis VKM B-501 (MIC=0.6 uM)), Gram-negative bacteria (E.coli DH5-alpha (MIC=0.6 uM), E.coli MH1 (MIC=0.6 uM), and P.aeruginosa PAO1 (MIC=18 uM)), and yeasts (P.pastoris GS115 (MIC&gt;37 uM), and S.cerevisiae Y190 (MIC&gt;37 uM)). Also has a moderate hemolytic activity against rabbit erythrocytes. Causes paralysis, but is not lethal when injected into insect (M.domestica) larvae. This chain is M-zodatoxin-Lt5a, found in Lachesana tarabaevi (Spider).